A 205-amino-acid polypeptide reads, in one-letter code: High frequency lysogenization protein HflD homolog (205 aa).

This sequence belongs to the HflD family.

The protein resides in the cytoplasm. The protein localises to the cell inner membrane. This chain is High frequency lysogenization protein HflD homolog, found in Vibrio campbellii (strain ATCC BAA-1116).